The sequence spans 400 residues: Transmembrane protein 43 (400 aa).

Alanine 2 carries the N-acetylalanine modification. Topologically, residues 2-31 are nuclear; the sequence is AANYSSTSSRKEHVKVTSEPQPGFLERLSE. A helical transmembrane segment spans residues 32-52; sequence TSGGMFVGLMTFLLSFYLIFT. The Perinuclear space segment spans residues 53–313; the sequence is NEGRALKTAT…NSMKTWGLRA (261 aa). Residues 314–334 traverse the membrane as a helical segment; that stretch reads AGWMAMFMGLNLMTRILYTLV. Residues 335–345 lie on the Nuclear side of the membrane; it reads DWFPVFRDLVN. A helical transmembrane segment spans residues 346 to 366; that stretch reads IGLKAFAFCVATSLTLLTVAA. The Perinuclear space segment spans residues 367-368; it reads GW. Residues 369–389 form a helical membrane-spanning segment; sequence LFYRPLWAALIGCLALVPIII. Residues 390–400 lie on the Nuclear side of the membrane; that stretch reads ARTRVPAKKLE.

This sequence belongs to the TMEM43 family. In terms of assembly, can form oligomers through the transmembrane domains. Interacts with EMD; the interaction retains EMD at the inner nuclear membrane. Interacts with LMNA and LMNB2. Interacts with SUN2. Interacts with RNF26; this interaction is important to modulate innate immune signaling through the cGAS-STING pathway. Interacts with CARD10. Interacts with gap junctions proteins GJB2/Cx26 and GJB4/Cx30. In terms of tissue distribution, widely expressed, including in the cochlea, heart, eye, brain and kidney.

It is found in the endoplasmic reticulum membrane. It localises to the nucleus inner membrane. The protein localises to the cell membrane. In terms of biological role, may have an important role in maintaining nuclear envelope structure by organizing protein complexes at the inner nuclear membrane. Required for retaining emerin at the inner nuclear membrane. Plays a role in the modulation of innate immune signaling through the cGAS-STING pathway by interacting with RNF26. In addition, functions as a critical signaling component in mediating NF-kappa-B activation by acting downstream of EGFR and upstream of CARD10. Contributes to passive conductance current in cochlear glia-like supporting cells, mediated by gap junctions and necessary for hearing. In Mus musculus (Mouse), this protein is Transmembrane protein 43 (Tmem43).